Consider the following 781-residue polypeptide: Isoquinoline 1-oxidoreductase subunit beta (781 aa).

As to quaternary structure, heterodimer of an alpha chain and a beta chain.

It catalyses the reaction isoquinoline + A + H2O = isoquinolin-1(2H)-one + AH2. Its function is as follows. Specific towards N-containing N-heterocyclic substrates, including isoquinoline, isoquinolin-5-ol, phthalazine and quinazoline. The protein is Isoquinoline 1-oxidoreductase subunit beta (iorB) of Brevundimonas diminuta (Pseudomonas diminuta).